Here is a 382-residue protein sequence, read N- to C-terminus: Galactokinase (382 aa).

34–37 (EHTD) lines the substrate pocket. Residue 124–130 (GAGLSSS) coordinates ATP. The Mg(2+) site is built by Ser130 and Glu162. The Proton acceptor role is filled by Asp174. Tyr223 provides a ligand contact to substrate.

This sequence belongs to the GHMP kinase family. GalK subfamily.

The protein localises to the cytoplasm. The enzyme catalyses alpha-D-galactose + ATP = alpha-D-galactose 1-phosphate + ADP + H(+). It participates in carbohydrate metabolism; galactose metabolism. Functionally, catalyzes the transfer of the gamma-phosphate of ATP to D-galactose to form alpha-D-galactose-1-phosphate (Gal-1-P). The sequence is that of Galactokinase from Escherichia coli O1:K1 / APEC.